A 1358-amino-acid chain; its full sequence is Indole-3-acetaldehyde oxidase (1358 aa).

The region spanning 11-98 is the 2Fe-2S ferredoxin-type domain; sequence STVVLAVNGK…RCSVTTSEGI (88 aa). [2Fe-2S] cluster-binding residues include C50, C55, and C58. One can recognise an FAD-binding PCMH-type domain in the interval 241-419; it reads IAASGDGWYH…LSIFIPEWGS (179 aa). The tract at residues 532 to 559 is disordered; the sequence is SSAPSNIDTPNGSYTHETGSNVDSPERH. Residues 537–554 are compositionally biased toward polar residues; that stretch reads NIDTPNGSYTHETGSNVD.

It belongs to the xanthine dehydrogenase family. In terms of assembly, aldehyde oxidases (AO) are homodimers and heterodimers of AO subunits. It depends on [2Fe-2S] cluster as a cofactor. FAD is required as a cofactor. Mo-molybdopterin serves as cofactor. As to expression, mostly expressed in roots, and, to a lower extent, in mesocotyl, leaves and coleoptile. Accumulates in apical region of maize coleoptiles (at protein level).

The protein localises to the cytoplasm. The enzyme catalyses indole-3-acetaldehyde + O2 + H2O = (indol-3-yl)acetate + H2O2 + H(+). Inhibited by 2-mercaptoethanol, p-chloromercuribenzoate, and iodoacetate. In terms of biological role, in higher plants aldehyde oxidases (AO) appear to be homo- and heterodimeric assemblies of AO subunits with probably different physiological functions. Involved in the biosynthesis of auxin from (indol-3-yl)acetaldehyde. Can also use indole-3-aldehyde and benzaldehyde as substrate. This chain is Indole-3-acetaldehyde oxidase (AO1), found in Zea mays (Maize).